We begin with the raw amino-acid sequence, 241 residues long: ATP synthase subunit a (241 aa).

Transmembrane regions (helical) follow at residues 30 to 50 (GQVFLTSWILLGALLVFISLG), 91 to 111 (FIGTLFLFVFVSNWGGALIPW), 128 to 148 (INTTIALALLVSLSYFYAGLS), 193 to 213 (LVVGVLVFLVPLILPIPVMFL), and 214 to 234 (GLFTSAIQALIFATLAAYYIG).

Belongs to the ATPase A chain family. F-type ATPases have 2 components, CF(1) - the catalytic core - and CF(0) - the membrane proton channel. CF(1) has five subunits: alpha(3), beta(3), gamma(1), delta(1), epsilon(1). CF(0) has four main subunits: a, b, b' and c.

It localises to the cellular thylakoid membrane. Its function is as follows. Key component of the proton channel; it plays a direct role in the translocation of protons across the membrane. The polypeptide is ATP synthase subunit a (Prochlorococcus marinus (strain MIT 9301)).